A 531-amino-acid chain; its full sequence is Ceramide kinase (531 aa).

The interval 1–115 (MGAMGAAEPL…SADEQLCHLW (115 aa)) is essential for enzyme activity. A required for binding to sulfatide and phosphoinositides region spans residues 1-125 (MGAMGAAEPL…LQTLRGLLES (125 aa)). The region spanning 128 to 278 (SRPKHLLVFI…IDVSSVHYHN (151 aa)) is the DAGKc domain. Residues 138 to 140 (NPF) and 170 to 174 (TEHAN) each bind ATP. Substrate is bound at residue 195–198 (GGDG). The active-site Proton donor/acceptor is D197. ATP is bound by residues E202, 239–241 (GST), R304, and R310. Phosphoserine occurs at positions 340 and 408. An ATP-binding site is contributed by 502–504 (DGE).

It depends on Ca(2+) as a cofactor. The cofactor is Mg(2+). In terms of tissue distribution, high level expression in heart, brain, testis and pancreas; low expression in spleen, liver and lung; not detected in skeletal muscle.

It is found in the cytoplasm. It localises to the cell membrane. It catalyses the reaction an N-acylsphing-4-enine + ATP = an N-acylsphing-4-enine 1-phosphate + ADP + H(+). The catalysed reaction is N-(hexanoyl)sphing-4-enine + ATP = N-hexanoylsphing-4-enine 1-phosphate + ADP + H(+). The enzyme catalyses N-(acetyl)-sphing-4-enine + ATP = N-(acetyl)-sphing-4-enine-1-phosphate + ADP + H(+). It carries out the reaction N-hexadecanoylsphing-4-enine + ATP = N-(hexadecanoyl)-sphing-4-enine-1-phosphate + ADP + H(+). It catalyses the reaction N-hexanoyl-(4R)-hydroxysphinganine + ATP = N-hexanoyl-(4R)-hydroxysphinganine-1-phosphate + ADP + H(+). In terms of biological role, catalyzes specifically the phosphorylation of ceramide to form ceramide 1-phosphate. Acts efficiently on natural and analog ceramides (C6, C8, C16 ceramides, and C8-dihydroceramide), to a lesser extent on C2-ceramide and C6-dihydroceramide, but not on other lipids, such as various sphingosines. Shows a greater preference for D-erythro isomer of ceramides. Binds phosphoinositides. The chain is Ceramide kinase (Cerk) from Mus musculus (Mouse).